The sequence spans 82 residues: Small ribosomal subunit protein bS18 (82 aa).

Positions 1–20 (MVDINQIPTRRPFHRRRKTC) are disordered.

It belongs to the bacterial ribosomal protein bS18 family. Part of the 30S ribosomal subunit. Forms a tight heterodimer with protein bS6.

Functionally, binds as a heterodimer with protein bS6 to the central domain of the 16S rRNA, where it helps stabilize the platform of the 30S subunit. The protein is Small ribosomal subunit protein bS18 of Brucella abortus (strain 2308).